A 248-amino-acid chain; its full sequence is Uridylate kinase (248 aa).

Residue 11-14 (KISG) participates in ATP binding. Glycine 53 contacts UMP. Residues glycine 54 and arginine 58 each coordinate ATP. Residues aspartate 74 and 135–142 (AGSPYLTT) contribute to the UMP site. Positions 162, 169, and 172 each coordinate ATP.

It belongs to the UMP kinase family. In terms of assembly, homohexamer.

The protein resides in the cytoplasm. It carries out the reaction UMP + ATP = UDP + ADP. Its pathway is pyrimidine metabolism; CTP biosynthesis via de novo pathway; UDP from UMP (UMPK route): step 1/1. Inhibited by UTP. Catalyzes the reversible phosphorylation of UMP to UDP. This Chlamydia pneumoniae (Chlamydophila pneumoniae) protein is Uridylate kinase.